The primary structure comprises 32 residues: ATP synthase 28 kDa subunit, mitochondrial (32 aa).

The protein localises to the mitochondrion. The protein resides in the mitochondrion inner membrane. Its function is as follows. Mitochondrial membrane ATP synthase (F(1)F(0) ATP synthase or Complex V) produces ATP from ADP in the presence of a proton gradient across the membrane which is generated by electron transport complexes of the respiratory chain. F-type ATPases consist of two structural domains, F(1) - containing the extramembraneous catalytic core and F(0) - containing the membrane proton channel, linked together by a central stalk and a peripheral stalk. During catalysis, ATP synthesis in the catalytic domain of F(1) is coupled via a rotary mechanism of the central stalk subunits to proton translocation. Part of the complex F(0) domain. This Spinacia oleracea (Spinach) protein is ATP synthase 28 kDa subunit, mitochondrial.